Here is a 319-residue protein sequence, read N- to C-terminus: Protein sprouty homolog 1 (319 aa).

Position 1 is an N-acetylmethionine (M1). The segment at 54–157 (TEGPSVVKRP…HRSERAIRTQ (104 aa)) is disordered. Residues 69–79 (PRQEKHERTHE) are compositionally biased toward basic and acidic residues. Residues 112–131 (SRSTSTGSAASSGSNSSASS) are compositionally biased toward low complexity. The SPR domain maps to 183–295 (QCGKCKCGEC…CYDWIHRPGC (113 aa)).

This sequence belongs to the sprouty family. Forms heterodimers with SPRY2. Interacts with TESK1. Interacts with CAV1 (via C-terminus).

It is found in the cytoplasm. The protein localises to the membrane. In terms of biological role, inhibits fibroblast growth factor (FGF)-induced retinal lens fiber differentiation, probably by inhibiting FGF-mediated phosphorylation of ERK1/2. Inhibits TGFB-induced epithelial-to-mesenchymal transition in lens epithelial cells. The polypeptide is Protein sprouty homolog 1 (SPRY1) (Bos taurus (Bovine)).